A 238-amino-acid polypeptide reads, in one-letter code: NAD(P)H-hydrate epimerase (238 aa).

In terms of domain architecture, YjeF N-terminal spans 10–225; sequence AIKVDQILFN…ALQRQYELNL (216 aa). A (6S)-NADPHX-binding site is contributed by 68–72; that stretch reads NNGGD. The K(+) site is built by asparagine 69 and aspartate 133. Residues 137-143 and aspartate 166 contribute to the (6S)-NADPHX site; that span reads GFSFKPP. Residue serine 169 coordinates K(+).

The protein belongs to the NnrE/AIBP family. Requires K(+) as cofactor.

It catalyses the reaction (6R)-NADHX = (6S)-NADHX. The enzyme catalyses (6R)-NADPHX = (6S)-NADPHX. Catalyzes the epimerization of the S- and R-forms of NAD(P)HX, a damaged form of NAD(P)H that is a result of enzymatic or heat-dependent hydration. This is a prerequisite for the S-specific NAD(P)H-hydrate dehydratase to allow the repair of both epimers of NAD(P)HX. The chain is NAD(P)H-hydrate epimerase from Drosophila willistoni (Fruit fly).